Consider the following 429-residue polypeptide: Glutamate-1-semialdehyde 2,1-aminomutase (429 aa).

K265 is modified (N6-(pyridoxal phosphate)lysine).

It belongs to the class-III pyridoxal-phosphate-dependent aminotransferase family. HemL subfamily. Homodimer. Requires pyridoxal 5'-phosphate as cofactor.

Its subcellular location is the cytoplasm. It carries out the reaction (S)-4-amino-5-oxopentanoate = 5-aminolevulinate. The protein operates within porphyrin-containing compound metabolism; protoporphyrin-IX biosynthesis; 5-aminolevulinate from L-glutamyl-tRNA(Glu): step 2/2. This Acidobacterium capsulatum (strain ATCC 51196 / DSM 11244 / BCRC 80197 / JCM 7670 / NBRC 15755 / NCIMB 13165 / 161) protein is Glutamate-1-semialdehyde 2,1-aminomutase.